Consider the following 299-residue polypeptide: Pectin lyase (299 aa).

Positions 1–18 (MKFSTFVSLGLTAITALA) are cleaved as a signal peptide. Composition is skewed to low complexity over residues 82 to 91 (RSAATSPSSD) and 232 to 246 (SASA…TTRT). Disordered regions lie at residues 82–105 (RSAA…PSPS) and 227–246 (SRGR…TTRT).

The protein belongs to the polysaccharide lyase 1 family.

Its subcellular location is the secreted. The catalysed reaction is Eliminative cleavage of (1-&gt;4)-alpha-D-galacturonan methyl ester to give oligosaccharides with 4-deoxy-6-O-methyl-alpha-D-galact-4-enuronosyl groups at their non-reducing ends.. The sequence is that of Pectin lyase (PELA) from Peyronellaea pinodes (Pea foot rot fungus).